Here is a 490-residue protein sequence, read N- to C-terminus: Tryptophan 5-hydroxylase 2 (490 aa).

Residue Ser-19 is modified to Phosphoserine. Positions 31–42 (LGSSTLNKPNSG) are enriched in polar residues. The tract at residues 31–58 (LGSSTLNKPNSGKNDDKGNKGSSKREAA) is disordered. A compositionally biased stretch (basic and acidic residues) spans 43-58 (KNDDKGNKGSSKREAA). Positions 65–140 (AVVFSLKNEV…TIVTLNPPEN (76 aa)) constitute an ACT domain. The Fe cation site is built by His-318, His-323, and Glu-363.

It belongs to the biopterin-dependent aromatic amino acid hydroxylase family. Interacts with DNAJC12. Requires Fe(2+) as cofactor. Brain specific.

It catalyses the reaction (6R)-L-erythro-5,6,7,8-tetrahydrobiopterin + L-tryptophan + O2 = 5-hydroxy-L-tryptophan + (4aS,6R)-4a-hydroxy-L-erythro-5,6,7,8-tetrahydrobiopterin. Its pathway is aromatic compound metabolism; serotonin biosynthesis; serotonin from L-tryptophan: step 1/2. This Homo sapiens (Human) protein is Tryptophan 5-hydroxylase 2 (TPH2).